The following is a 248-amino-acid chain: NADP-dependent 3-hydroxy acid dehydrogenase YdfG (248 aa).

NADP(+) contacts are provided by residues 7 to 12 (GATAGF), 32 to 33 (RR), 54 to 55 (DV), and Asn81. Substrate is bound at residue Ser134. NADP(+) contacts are provided by residues Tyr147, Lys151, and 177-185 (PGLVGGTEF). Tyr147 serves as the catalytic Proton acceptor.

The protein belongs to the short-chain dehydrogenases/reductases (SDR) family. Homotetramer.

The enzyme catalyses 3-hydroxypropanoate + NADP(+) = 3-oxopropanoate + NADPH + H(+). It carries out the reaction L-allo-threonine + NADP(+) = aminoacetone + CO2 + NADPH. NADP-dependent dehydrogenase with broad substrate specificity acting on 3-hydroxy acids. Catalyzes the NADP-dependent oxidation of L-allo-threonine to L-2-amino-3-keto-butyrate, which is spontaneously decarboxylated into aminoacetone. Also acts on D-threonine, L-serine, D-serine, D-3-hydroxyisobutyrate, L-3-hydroxyisobutyrate, D-glycerate and L-glycerate. Able to catalyze the reduction of the malonic semialdehyde to 3-hydroxypropionic acid. YdfG is apparently supplementing RutE, the presumed malonic semialdehyde reductase involved in pyrimidine degradation since both are able to detoxify malonic semialdehyde. The polypeptide is NADP-dependent 3-hydroxy acid dehydrogenase YdfG (Salmonella typhi).